A 435-amino-acid chain; its full sequence is uncharacterized protein (435 aa).

11 consecutive transmembrane segments (helical) span residues 9–29, 57–77, 110–130, 146–166, 176–196, 226–246, 280–300, 321–341, 343–363, 367–387, and 408–428; these read IIVL…ITFA, VGLD…GNIM, TLFG…GGIM, AINV…VLIV, VAAL…ALMT, LPSL…VFTP, VVTS…SWAM, WVIL…MDIT, AILI…IDPV, IIMV…TILF, and FLAL…SLLL.

The protein belongs to the YiaN/YgiK family.

Its subcellular location is the cell inner membrane. This is an uncharacterized protein from Salmonella typhimurium (strain LT2 / SGSC1412 / ATCC 700720).